A 207-amino-acid chain; its full sequence is Anthranilate synthase component II (207 aa).

Residues 17 to 207 (RVLFVDNFDS…DVIRNFLAGL (191 aa)) form the Glutamine amidotransferase type-1 domain. Residue 66-68 (GPG) coordinates L-glutamine. Residue C96 is the Nucleophile; for GATase activity of the active site. Residue 146–147 (SL) participates in L-glutamine binding. Catalysis depends on residues H187 and E189.

As to quaternary structure, tetramer of two components I and two components II.

The catalysed reaction is chorismate + L-glutamine = anthranilate + pyruvate + L-glutamate + H(+). The protein operates within amino-acid biosynthesis; L-tryptophan biosynthesis; L-tryptophan from chorismate: step 1/5. The polypeptide is Anthranilate synthase component II (trpG1) (Haloarcula marismortui (strain ATCC 43049 / DSM 3752 / JCM 8966 / VKM B-1809) (Halobacterium marismortui)).